Reading from the N-terminus, the 420-residue chain is 3-isopropylmalate dehydratase large subunit (420 aa).

Cys300, Cys360, and Cys363 together coordinate [4Fe-4S] cluster.

It belongs to the aconitase/IPM isomerase family. LeuC type 2 subfamily. Heterodimer of LeuC and LeuD. [4Fe-4S] cluster serves as cofactor.

The enzyme catalyses (2R,3S)-3-isopropylmalate = (2S)-2-isopropylmalate. It functions in the pathway amino-acid biosynthesis; L-leucine biosynthesis; L-leucine from 3-methyl-2-oxobutanoate: step 2/4. Catalyzes the isomerization between 2-isopropylmalate and 3-isopropylmalate, via the formation of 2-isopropylmaleate. This is 3-isopropylmalate dehydratase large subunit from Helicobacter hepaticus (strain ATCC 51449 / 3B1).